Consider the following 309-residue polypeptide: MILTVTMNPSIDISYPLDELKIDTVNRVVDVTKTAGGKGLNVTRVLSEFGDSVLATGLVGGKLGEFLVEHIDNQVKKDFFSIKGETRNCIAILHGDNQTEVLEKGPEVLEQEGQEFLEHFKKLLESVEVVAISGSLPAGLPVDYYASLVELANQAGKPVVLDCSGAALQAVLESPHKPTVIKPNNEELSQLLGREVSEDLDELKEVLQEPLFAGIEWIIVSLGANGTFAKHGDTFYKVDIPRIQVVNPVGSGDXTVAGISSGLLHKESDAELLIKANVLGMLNAQEKMTGHVNMANYQALYDQLIVKEV.

The protein belongs to the carbohydrate kinase PfkB family. LacC subfamily.

The enzyme catalyses D-tagatofuranose 6-phosphate + ATP = D-tagatofuranose 1,6-bisphosphate + ADP + H(+). The protein operates within carbohydrate metabolism; D-tagatose 6-phosphate degradation; D-glyceraldehyde 3-phosphate and glycerone phosphate from D-tagatose 6-phosphate: step 1/2. The protein is Tagatose-6-phosphate kinase of Streptococcus pneumoniae serotype 19F (strain G54).